Consider the following 367-residue polypeptide: Popeye domain-containing protein 2 (367 aa).

Asparagine 4 is a glycosylation site (N-linked (GlcNAc...) asparagine). 2 helical membrane passes run 36 to 56 and 77 to 97; these read FLLM…LFGI and IVLW…QLVY. Disordered stretches follow at residues 273–292 and 312–367; these read PSAS…ALEA and APPA…TPEL. The span at 278–290 shows a compositional bias: acidic residues; it reads GEPESEKDDEEAL. Residues 344 to 356 show a composition bias toward polar residues; that stretch reads PLQNSSQVMSRSQ. Asparagine 347 carries an N-linked (GlcNAc...) asparagine glycan. At threonine 364 the chain carries Phosphothreonine.

It belongs to the popeye family. Expressed in the developing and adult heart, with high expression levels in the sinus and atrioventricular nodes. Also expressed in the bladder and skeletal muscle.

The protein resides in the membrane. Its subcellular location is the cell membrane. It localises to the sarcolemma. In terms of biological role, important for the maintenance of cardiac function. Plays a regulatory function in heart rate dynamics mediated, at least in part, through cAMP-binding and, probably, by increasing cell surface expression of the potassium channel KCNK2 and enhancing current density. The protein is Popeye domain-containing protein 2 (Popdc2) of Mus musculus (Mouse).